Reading from the N-terminus, the 82-residue chain is Translational regulator CsrA (82 aa).

The protein belongs to the CsrA/RsmA family. Homodimer; the beta-strands of each monomer intercalate to form a hydrophobic core, while the alpha-helices form wings that extend away from the core.

Its subcellular location is the cytoplasm. A translational regulator that binds mRNA to regulate translation initiation and/or mRNA stability. Usually binds in the 5'-UTR at or near the Shine-Dalgarno sequence preventing ribosome-binding, thus repressing translation. Its main target seems to be the major flagellin gene, while its function is anatagonized by FliW. The polypeptide is Translational regulator CsrA (Brachyspira hyodysenteriae (strain ATCC 49526 / WA1)).